A 277-amino-acid chain; its full sequence is Phosphoenolpyruvate synthase regulatory protein (277 aa).

Position 157–164 (157–164) interacts with ADP; that stretch reads GVSRCGKT.

This sequence belongs to the pyruvate, phosphate/water dikinase regulatory protein family. PSRP subfamily.

It carries out the reaction [pyruvate, water dikinase] + ADP = [pyruvate, water dikinase]-phosphate + AMP + H(+). The enzyme catalyses [pyruvate, water dikinase]-phosphate + phosphate + H(+) = [pyruvate, water dikinase] + diphosphate. Its function is as follows. Bifunctional serine/threonine kinase and phosphorylase involved in the regulation of the phosphoenolpyruvate synthase (PEPS) by catalyzing its phosphorylation/dephosphorylation. This is Phosphoenolpyruvate synthase regulatory protein from Salmonella gallinarum (strain 287/91 / NCTC 13346).